A 311-amino-acid polypeptide reads, in one-letter code: Ribosomal RNA large subunit methyltransferase F (311 aa).

It belongs to the methyltransferase superfamily. METTL16/RlmF family.

It localises to the cytoplasm. It carries out the reaction adenosine(1618) in 23S rRNA + S-adenosyl-L-methionine = N(6)-methyladenosine(1618) in 23S rRNA + S-adenosyl-L-homocysteine + H(+). Its function is as follows. Specifically methylates the adenine in position 1618 of 23S rRNA. The chain is Ribosomal RNA large subunit methyltransferase F from Pectobacterium atrosepticum (strain SCRI 1043 / ATCC BAA-672) (Erwinia carotovora subsp. atroseptica).